Reading from the N-terminus, the 496-residue chain is 1-aminocyclopropane-1-carboxylate synthase 4 (496 aa).

The residue at position 300 (lysine 300) is an N6-(pyridoxal phosphate)lysine.

The protein belongs to the class-I pyridoxal-phosphate-dependent aminotransferase family. The cofactor is pyridoxal 5'-phosphate. In terms of tissue distribution, expressed in leaves. Expressed in shoots and leaf blades. Expressed at low levels in leaf sheaths.

It carries out the reaction S-adenosyl-L-methionine = 1-aminocyclopropane-1-carboxylate + S-methyl-5'-thioadenosine + H(+). The protein operates within alkene biosynthesis; ethylene biosynthesis via S-adenosyl-L-methionine; ethylene from S-adenosyl-L-methionine: step 1/2. Catalyzes the formation of 1-aminocyclopropane-1-carboxylate, a direct precursor of ethylene in higher plants. This chain is 1-aminocyclopropane-1-carboxylate synthase 4, found in Oryza sativa subsp. japonica (Rice).